The following is a 924-amino-acid chain: DNA repair and recombination protein RDH54 (924 aa).

Basic and acidic residues predominate over residues 1 to 10 (MQIPKYENKP). 2 disordered regions span residues 1 to 21 (MQIPKYENKPFKPPRRVGSNK) and 155 to 183 (EALSQNMGNPSPPTTSTTETVPSTKNDGG). Residues 168–178 (TTSTTETVPST) show a composition bias toward low complexity. One can recognise a Helicase ATP-binding domain in the interval 299–487 (LENDSDISGC…FTIIDFINPG (189 aa)). 346 to 353 (IPLTGLCK) provides a ligand contact to ATP. The short motif at 472-475 (NDLN) is the DEGH box element. Lys615 participates in a covalent cross-link: Glycyl lysine isopeptide (Lys-Gly) (interchain with G-Cter in ubiquitin). The Helicase C-terminal domain occupies 631–790 (KLKVLMTLLE…DSEMRNKESS (160 aa)).

The protein belongs to the SNF2/RAD54 helicase family. Interacts with RAD51 and DMC1.

It is found in the nucleus. It carries out the reaction ATP + H2O = ADP + phosphate + H(+). Involved in the recombinational repair of double-strand breaks (DSB) in DNA during mitosis and meiosis. Has DNA dependent ATPase activity. Promotes D-loop (displacement loop) formation with RAD51 recombinase. Modifies the topology of double-stranded DNA during the D-loop reaction to facilitate the invasion of the homologous duplex molecule by the initiating single-stranded DNA substrate. Required for adaptation from G2/M checkpoint arrest induced by a double strand break, by participating in monitoring the extent of single-stranded DNA produced by resection of DNA ends. This role is distinct from its roles in recombination. Promotes colocalization of RAD51 and DMC1 during meiotic recombination. Involved in crossover interference. The chain is DNA repair and recombination protein RDH54 (RDH54) from Saccharomyces cerevisiae (strain JAY291) (Baker's yeast).